The following is a 315-amino-acid chain: Homoserine kinase (315 aa).

An ATP-binding site is contributed by Pro-91–Ser-101.

This sequence belongs to the GHMP kinase family. Homoserine kinase subfamily.

It is found in the cytoplasm. The enzyme catalyses L-homoserine + ATP = O-phospho-L-homoserine + ADP + H(+). It functions in the pathway amino-acid biosynthesis; L-threonine biosynthesis; L-threonine from L-aspartate: step 4/5. Its function is as follows. Catalyzes the ATP-dependent phosphorylation of L-homoserine to L-homoserine phosphate. This is Homoserine kinase from Buchnera aphidicola subsp. Cinara cedri (strain Cc).